A 725-amino-acid chain; its full sequence is MFRVFNALTGAGSPKATELSGEERTKFILQQAHDFEIALQAMDYVLDDNAEVGLKLLADNQATSPGDATVGALAKGVIEFLEATLGFEPEVMKKASTTLAEAEQLSLKSRAKLQKLNIKTSSLYPPGTEYAVTYTESCLLHALLMLFSESMVEGAKALFKLRKAYHMLQDILKEINASEKRKRSSIYLQEINESTASFISSGTCFTSYDIPYKLTPEEEQDKELLDLANKVYSLRRKRLCGAHIGNSPAINRLRDDVGAASLKKGSDEETQEFQLLSDNANINQATMDEFIHSGVNLCFGILQVVLSLIPPAIGAVLSVVGFHGSREEGLRLVWKSTKDRNIHGGIGLLGLLFYYDGPFQFTDIDFDIPAARDDNLPVTEMDRPTLLHPGKILTSALLQARALFPNSALWLLQEARMLSKQGRLKEAVDLLDSIDHNTIEMKQVKALIVFEKATTLVYMHEFERGAETMLIMLSISEWSHALYTYFAGCCYLEMFRKYEMGILNGENAAEKKAYYKERATNLVFESANMVGKKKFMSKILPLDRFLLRKVDQFKKFQNIIKSSDPLDSIGVSPVHELIYFYNGYNRMTMKELNLSLKSLTEYRNPTIDLQNPDQELIKDLLTSLVLRRTGKIEEGCKILDTQVLPQLFTIQNDKVKYIKKTEDPWVYPTAFYERALFSWKLKGMNGLHEAHEWLIRAQNYQDDYELSTRIGMKIKAAKDRVEESI.

Belongs to the IML2 family. Interacts with lipid droplet proteins.

The protein localises to the cytoplasm. The protein resides in the nucleus. Functionally, inclusion body (IB) resident protein that interacts strongly with lipid droplet (LD) proteins. Involved in LD-mediated IB clearing after protein folding stress, probably by enabling access to the IBs of an LD-stored soluble sterol derivative that acts as a chaperone in inclusion clearing. This chain is Inclusion body clearance protein IML2 (IML2), found in Kluyveromyces lactis (strain ATCC 8585 / CBS 2359 / DSM 70799 / NBRC 1267 / NRRL Y-1140 / WM37) (Yeast).